The following is a 339-amino-acid chain: Nicotinate-nucleotide--dimethylbenzimidazole phosphoribosyltransferase (339 aa).

The Proton acceptor role is filled by Glu-306.

The protein belongs to the CobT family.

It catalyses the reaction 5,6-dimethylbenzimidazole + nicotinate beta-D-ribonucleotide = alpha-ribazole 5'-phosphate + nicotinate + H(+). It participates in nucleoside biosynthesis; alpha-ribazole biosynthesis; alpha-ribazole from 5,6-dimethylbenzimidazole: step 1/2. Catalyzes the synthesis of alpha-ribazole-5'-phosphate from nicotinate mononucleotide (NAMN) and 5,6-dimethylbenzimidazole (DMB). The protein is Nicotinate-nucleotide--dimethylbenzimidazole phosphoribosyltransferase of Brucella abortus (strain S19).